Here is a 351-residue protein sequence, read N- to C-terminus: Alcohol dehydrogenase 5 (351 aa).

Residues Cys-47, His-70, Cys-101, Cys-104, Cys-107, Cys-115, and Cys-183 each contribute to the Zn(2+) site. NAD(+) is bound by residues 181–187 (GACGGLG), Asp-205, Lys-210, 272–274 (VGM), and Arg-344.

It belongs to the zinc-containing alcohol dehydrogenase family. The cofactor is Zn(2+).

It carries out the reaction a primary alcohol + NAD(+) = an aldehyde + NADH + H(+). The catalysed reaction is a secondary alcohol + NAD(+) = a ketone + NADH + H(+). The chain is Alcohol dehydrogenase 5 (ADH5) from Saccharomyces pastorianus (Lager yeast).